A 679-amino-acid chain; its full sequence is Methionine--tRNA ligase (679 aa).

Residues 15 to 25 carry the 'HIGH' region motif; sequence PYANGPIHLGH. Zn(2+) contacts are provided by Cys146, Cys149, Cys159, and Cys162. A 'KMSKS' region motif is present at residues 332-336; the sequence is KMSKS. Lys335 serves as a coordination point for ATP. The tRNA-binding domain occupies 578–679; sequence DFAKIDLRIA…EGAQPGMKVK (102 aa).

Belongs to the class-I aminoacyl-tRNA synthetase family. MetG type 1 subfamily. Homodimer. Zn(2+) serves as cofactor.

The protein localises to the cytoplasm. The enzyme catalyses tRNA(Met) + L-methionine + ATP = L-methionyl-tRNA(Met) + AMP + diphosphate. Its function is as follows. Is required not only for elongation of protein synthesis but also for the initiation of all mRNA translation through initiator tRNA(fMet) aminoacylation. In Shewanella halifaxensis (strain HAW-EB4), this protein is Methionine--tRNA ligase.